A 276-amino-acid polypeptide reads, in one-letter code: MDAGDASRLGESLDAVSAAFQSRVMELQELVLARNMYPATAIPDLAAVDVSLTAMEAQLQAVRRRLQEEREAFPKAKKLVQQSLKQQRRLQLMLANMPTGMREDVFATPLEHNSSMMFPESLNFSSAVPEVRDHDLKIKEEPTAPPKKGRGPAPRWYISTEELDSLSSYMRGRLTLEKVNIAINEVASYADGNAHLVACPKKKLSEDTWEKALELRDIAARESVKGRHFFLETDIKGPGLKLDTTGKAILTVLRHLGRFQETRIGHHRVFILSKQQ.

Positions valine 48–lysine 78 form a coiled coil.

This sequence belongs to the SKA1 family.

The sequence is that of SKA complex subunit 1 homolog from Oryza sativa subsp. japonica (Rice).